We begin with the raw amino-acid sequence, 279 residues long: Protein FAM151B (279 aa).

Belongs to the menorin family.

Its function is as follows. Essential for survival of retinal photoreceptor cells. The sequence is that of Protein FAM151B (Fam151b) from Mus musculus (Mouse).